The sequence spans 445 residues: Pre-B-cell leukemia transcription factor 2 (445 aa).

Positions 13–44 (VGIPGLPIHGGPQTLTPHPMHEPPTDNGEPRK) are disordered. The span at 31 to 44 (PMHEPPTDNGEPRK) shows a compositional bias: basic and acidic residues. The 195-residue stretch at 42-236 (PRKQDIGDIL…VMILRSRFLD (195 aa)) folds into the PBC domain. The PBC-A stretch occupies residues 49 to 128 (DILQQIMTIT…EGVAGPEKGG (80 aa)). Residues 131 to 236 (AAAAAAAAAS…VMILRSRFLD (106 aa)) form a PBC-B region. The segment at residues 237–299 (ARRKRRNFSK…NKRIRYKKNI (63 aa)) is a DNA-binding region (homeobox; TALE-type). Over residues 319–332 (QGGHSGANSPTTPT) the composition is skewed to polar residues. Residues 319 to 338 (QGGHSGANSPTTPTSAGSGG) form a disordered region.

Belongs to the TALE/PBX homeobox family.

It is found in the nucleus. Transcriptional activator that binds the sequence 5'-ATCAATCAA-3'. The protein is Pre-B-cell leukemia transcription factor 2 (pbx2) of Xenopus laevis (African clawed frog).